The following is a 408-amino-acid chain: Alkane 1-monooxygenase (408 aa).

The next 4 helical transmembrane spans lie at 30 to 50, 58 to 78, 102 to 122, and 126 to 146; these read LWMI…GYQF, IFAL…DTII, LVKS…YLVS, and TSFI…GIAV. H150, H154, H180, H184, and H185 together coordinate Fe cation. Residues 254 to 274 traverse the membrane as a helical segment; that stretch reads IIAIFGKGTIPYLVTQAFYGI. Positions 324, 327, and 328 each coordinate Fe cation.

It belongs to the fatty acid desaturase type 1 family. AlkB subfamily. It depends on Fe(3+) as a cofactor.

The protein localises to the cell inner membrane. It catalyses the reaction octane + 2 reduced [rubredoxin] + O2 + 2 H(+) = 2 oxidized [rubredoxin] + octan-1-ol + H2O. Its pathway is hydrocarbon metabolism; alkane degradation. Catalyzes the hydroxylation of n-alkanes in the presence of a NADH-rubredoxin reductase and rubredoxin. It preferably hydroxylases long-chain-length alkanes with at least 12 carbon atoms. The polypeptide is Alkane 1-monooxygenase (alkB) (Acinetobacter baylyi (strain ATCC 33305 / BD413 / ADP1)).